The primary structure comprises 172 residues: Protein-export protein SecB (172 aa).

The protein belongs to the SecB family. In terms of assembly, homotetramer, a dimer of dimers. One homotetramer interacts with 1 SecA dimer.

The protein localises to the cytoplasm. Functionally, one of the proteins required for the normal export of preproteins out of the cell cytoplasm. It is a molecular chaperone that binds to a subset of precursor proteins, maintaining them in a translocation-competent state. It also specifically binds to its receptor SecA. The protein is Protein-export protein SecB of Ralstonia pickettii (strain 12J).